Reading from the N-terminus, the 546-residue chain is MAAKEVKFSVDARDKMLRGVDILANAVKVTLGPKGRNVVLDKSFGAPRITKDGVTVAKEIELEDKFENMGAQMVREVASKSADAAGDGTTTATVLAQAIVREGAKSVAAGMNPMDLKRGIDLAVEAVVADLVKNSKKVTSNDEIAQVGTISANGDAEIGKFLADAMKKVGNEGVITVEEAKSLETELDVVEGMQFDRGYISPYFVTNADKMRVEMDDAYILINEKKLSSLNELLPLLEAVVQTGKPLVIVAEDVEGEALATLVVNRLRGGLKVAAVKAPGFGDRRKAMLQDIAILTGGQAISEDLGIKLENVTLNMLGRAKKVMIDKENTTIVNGAGKKADIEARVSQIKAQIEETTSDYDREKLQERLAKLAGGVAVIRVGGATEVEVKERKDRVDDAMHATRAAVEEGIVPGGGVALLRASEQLKGLRTKNDDQKTGVEIVRKALSAPARQIAINAGEDGSVIVGKILENKTYAYGFDSQTGEYVNLVTKGIIDPTKVVRTAIQNAASVAALLITTEAMVAELPKKGGAGPAMPPGGGMGGMDF.

ATP is bound by residues T30–P33, K51, D87–T91, G415, and D496.

This sequence belongs to the chaperonin (HSP60) family. Forms a cylinder of 14 subunits composed of two heptameric rings stacked back-to-back. Interacts with the co-chaperonin GroES.

The protein localises to the cytoplasm. It catalyses the reaction ATP + H2O + a folded polypeptide = ADP + phosphate + an unfolded polypeptide.. Its function is as follows. Together with its co-chaperonin GroES, plays an essential role in assisting protein folding. The GroEL-GroES system forms a nano-cage that allows encapsulation of the non-native substrate proteins and provides a physical environment optimized to promote and accelerate protein folding. The polypeptide is Chaperonin GroEL 6 (Bradyrhizobium diazoefficiens (strain JCM 10833 / BCRC 13528 / IAM 13628 / NBRC 14792 / USDA 110)).